A 312-amino-acid polypeptide reads, in one-letter code: Ubiquinone biosynthesis O-methyltransferase, mitochondrial (312 aa).

The N-terminal 32 residues, 1 to 32 (MLLRSRFLKVIHVRKQLSACSRFAIQTQTRCK), are a transit peptide targeting the mitochondrion. S-adenosyl-L-methionine contacts are provided by Arg-68, Gly-130, Asp-153, and Met-196. Residues Glu-197, Glu-200, and His-201 each contribute to the Mg(2+) site.

Belongs to the class I-like SAM-binding methyltransferase superfamily. UbiG/COQ3 family. Component of a multi-subunit COQ enzyme complex, composed of at least COQ3, COQ4, COQ5, COQ6, COQ7 and COQ9. Interacts directly with COQ4. It depends on Mg(2+) as a cofactor.

Its subcellular location is the mitochondrion inner membrane. It carries out the reaction 3,4-dihydroxy-5-(all-trans-hexaprenyl)benzoate + S-adenosyl-L-methionine = 4-hydroxy-3-methoxy-5-(all-trans-hexaprenyl)benzoate + S-adenosyl-L-homocysteine + H(+). The catalysed reaction is a 3-demethylubiquinone + S-adenosyl-L-methionine = a ubiquinone + S-adenosyl-L-homocysteine. It catalyses the reaction 3-demethylubiquinol-6 + S-adenosyl-L-methionine = ubiquinol-6 + S-adenosyl-L-homocysteine + H(+). Its pathway is cofactor biosynthesis; ubiquinone biosynthesis. With respect to regulation, regulated in response to catabolite repression. O-methyltransferase required for two non-consecutive steps during ubiquinone biosynthesis. Catalyzes the 2 O-methylation of 3,4-dihydroxy-5-(all-trans-hexaprenyl)benzoic acid into 4-hydroxy-3-methoxy-5-(all-trans-hexaprenyl)benzoic acid. Also catalyzes the last step of ubiquinone biosynthesis by mediating methylation of 3-demethylubiquinone into ubiquinone. Also able to mediate the methylation of 3-demethylubiquinol-6 into ubiquinol-6. The chain is Ubiquinone biosynthesis O-methyltransferase, mitochondrial from Saccharomyces cerevisiae (strain ATCC 204508 / S288c) (Baker's yeast).